A 466-amino-acid chain; its full sequence is Argininosuccinate lyase (466 aa).

It belongs to the lyase 1 family. Argininosuccinate lyase subfamily.

Its subcellular location is the cytoplasm. The catalysed reaction is 2-(N(omega)-L-arginino)succinate = fumarate + L-arginine. It participates in amino-acid biosynthesis; L-arginine biosynthesis; L-arginine from L-ornithine and carbamoyl phosphate: step 3/3. In Campylobacter concisus (strain 13826), this protein is Argininosuccinate lyase.